A 189-amino-acid chain; its full sequence is UPF0301 protein HRM2_24640 (189 aa).

The protein belongs to the UPF0301 (AlgH) family.

The polypeptide is UPF0301 protein HRM2_24640 (Desulforapulum autotrophicum (strain ATCC 43914 / DSM 3382 / VKM B-1955 / HRM2) (Desulfobacterium autotrophicum)).